We begin with the raw amino-acid sequence, 715 residues long: Elongation factor G (715 aa).

Residues Arg-12 to Leu-309 form the tr-type G domain. GTP contacts are provided by residues Ala-21–Thr-28, Asp-108–His-112, and Asn-162–Asp-165.

It belongs to the TRAFAC class translation factor GTPase superfamily. Classic translation factor GTPase family. EF-G/EF-2 subfamily.

The protein resides in the cytoplasm. Catalyzes the GTP-dependent ribosomal translocation step during translation elongation. During this step, the ribosome changes from the pre-translocational (PRE) to the post-translocational (POST) state as the newly formed A-site-bound peptidyl-tRNA and P-site-bound deacylated tRNA move to the P and E sites, respectively. Catalyzes the coordinated movement of the two tRNA molecules, the mRNA and conformational changes in the ribosome. This chain is Elongation factor G, found in Rubrobacter xylanophilus (strain DSM 9941 / JCM 11954 / NBRC 16129 / PRD-1).